The primary structure comprises 109 residues: Spermidine export protein MdtI (109 aa).

The next 4 helical transmembrane spans lie at 6 to 26 (WVHG…NVLL), 36 to 56 (CYGI…SQAV), 64 to 84 (AYAL…WVLF), and 88 to 108 (LNPK…MIKL).

It belongs to the drug/metabolite transporter (DMT) superfamily. Small multidrug resistance (SMR) (TC 2.A.7.1) family. MdtI subfamily. As to quaternary structure, forms a complex with MdtJ.

It is found in the cell inner membrane. Catalyzes the excretion of spermidine. The sequence is that of Spermidine export protein MdtI from Salmonella arizonae (strain ATCC BAA-731 / CDC346-86 / RSK2980).